The sequence spans 834 residues: ATP-dependent DNA helicase fml1 (834 aa).

In terms of domain architecture, Helicase ATP-binding spans Ile80–Arg248. Residue Leu93–Thr100 participates in ATP binding. Residues Asp196–His199 carry the DEAH box motif. A Helicase C-terminal domain is found at His416–Arg582. Residues Glu650 to Gln690 form an interaction with MHF complex region. Positions Asn738–Gln769 are disordered. Over residues Thr740–Gln754 the composition is skewed to basic and acidic residues.

It belongs to the DEAD box helicase family. DEAH subfamily. FANCM sub-subfamily.

It is found in the cytoplasm. It localises to the nucleus. The protein resides in the nucleolus. The catalysed reaction is ATP + H2O = ADP + phosphate + H(+). ATP-dependent DNA helicase involved in DNA damage repair by homologous recombination and in genome maintenance. Capable of unwinding D-loops. Plays a role in limiting crossover recombination during mitotic DNA double-strand break (DSB) repair. Component of a FANCM-MHF complex which promotes gene conversion at blocked replication forks, probably by reversal of the stalled fork. FANCM-MHF also promotes non-crossover recombination in meiotic cells. The sequence is that of ATP-dependent DNA helicase fml1 from Schizosaccharomyces pombe (strain 972 / ATCC 24843) (Fission yeast).